The primary structure comprises 1647 residues: Ras GTPase-activating-like protein IQG1 (1647 aa).

Residues 18–51 (DTTATTTTTTTSNVLQPSNRLNSPTKFNRKSLDN) are disordered. Residues 19–28 (TTATTTTTTT) are compositionally biased toward low complexity. The segment covering 29–43 (SNVLQPSNRLNSPTK) has biased composition (polar residues). Ser48 carries the post-translational modification Phosphoserine. 3 positions are modified to phosphothreonine: Thr66, Thr72, and Thr82. Ser83, Ser91, and Ser139 each carry phosphoserine. Positions 143 to 162 (FNTQSNVHTPLKQLNQPIGT) are enriched in polar residues. A disordered region spans residues 143–175 (FNTQSNVHTPLKQLNQPIGTPSSSSLSPAKNAS). Low complexity predominate over residues 163–175 (PSSSSLSPAKNAS). Phosphoserine is present on residues Ser165, Ser167, and Ser169. The Calponin-homology (CH) domain occupies 184–291 (LCRIEAIKQW…FCLHALSYIL (108 aa)). Residues 326-427 (PLPNFSSADT…STSNAKLELH (102 aa)) form a disordered region. The segment covering 342–355 (TSNNNSSTTSATAA) has biased composition (low complexity). Thr367 bears the Phosphothreonine mark. Over residues 368 to 379 (PSPLKRPQQLQK) the composition is skewed to low complexity. The residue at position 369 (Ser369) is a Phosphoserine. 2 stretches are compositionally biased toward basic and acidic residues: residues 380-392 (KQLE…KPEL) and 402-413 (ISRDDPFTDRVD). Ser433 and Ser440 each carry phosphoserine. 9 consecutive IQ domains span residues 467-478 (FQSLARGAVFRY), 528-539 (LQSIIRKNFVIN), 556-567 (LQSLIRGKLTRD), 586-597 (FQSLVRMKSIYS), 616-627 (LQSIARSQLYHR), 642-653 (IQSIIRRNAVIE), 672-683 (LQSIARGGVART), 734-745 (VQTLFRGVLSRY), and 764-775 (LQSVARGKLMRG). A coiled-coil region spans residues 841-919 (LSDLKDLIIE…KKIELWQTLF (79 aa)). Residues 958-1223 (PVRDSSITYH…DTVKSIISQA (266 aa)) enclose the Ras-GAP domain. Phosphoserine occurs at positions 1064, 1068, 1088, 1383, and 1385.

As to quaternary structure, interacts with myosin MYO1 and its light chain MLC1. Interacts with BNI1. Interacts with BNR1. Interacts with CLB2. Interacts with CLB4. Interacts with CDC28. Post-translationally, hyperphosphorylated. Phosphorylation is cell cycle-dependent and peaks at the time of cytokinesis. Contains 21 consensus sites for cyclin-dependent kinases (CDKs). At least some of them are phosphorylated by the CLB2-CDC28 kinase complex. Mutation of 15 of the phosphorylation sites to Ala caused both premature assembly and delayed disassembly of the actomyosin ring, blocked interaction with the actin-nucleating proteins BNI1 and BNR1, and resulted in defects in cytokinesis.

It is found in the bud neck. Its function is as follows. Required for the assembly and the contraction of the actomyosin ring at the bud neck during cytokinesis. This chain is Ras GTPase-activating-like protein IQG1 (IQG1), found in Candida albicans (strain SC5314 / ATCC MYA-2876) (Yeast).